Consider the following 800-residue polypeptide: Putative antiporter subunit mnhA2 (800 aa).

A run of 20 helical transmembrane segments spans residues 1–21 (MSLV…LLMS), 33–53 (IALV…PSVA), 78–98 (GLSL…FFYA), 118–138 (LFMF…MYIF), 167–187 (FMIT…LYIM), 207–227 (GLFI…SAQF), 241–261 (TPVS…FLLL), 273–293 (YVYI…ITAL), 300–320 (GILA…VGIG), 331–351 (IASI…NHAI), 387–407 (LVMT…GFLS), 424–444 (FSLI…VFTF), 472–492 (PWLF…IFFV), 527–547 (GFNI…VLAI), 595–615 (IIMT…RIGL), 627–647 (GALE…LIFI), 651–671 (LTMV…FIAM), 676–696 (LALT…VSFS), 712–732 (IIKI…IFIT), and 768–788 (LDTL…YTLL).

Belongs to the CPA3 antiporters (TC 2.A.63) subunit A family. In terms of assembly, may form a heterooligomeric complex that consists of seven subunits: mnhA2, mnhB2, mnhC2, mnhD2, mnhE2, mnhF2 and mnhG2.

Its subcellular location is the cell membrane. This is Putative antiporter subunit mnhA2 (mnhA2) from Staphylococcus aureus (strain MSSA476).